Reading from the N-terminus, the 343-residue chain is Ferrochelatase (343 aa).

Histidine 211 and glutamate 292 together coordinate Fe cation.

The protein belongs to the ferrochelatase family.

It localises to the cytoplasm. The catalysed reaction is heme b + 2 H(+) = protoporphyrin IX + Fe(2+). Its pathway is porphyrin-containing compound metabolism; protoheme biosynthesis; protoheme from protoporphyrin-IX: step 1/1. In terms of biological role, catalyzes the ferrous insertion into protoporphyrin IX. This Gluconobacter oxydans (strain 621H) (Gluconobacter suboxydans) protein is Ferrochelatase.